The chain runs to 159 residues: Sulfur carrier protein DsrE2 (159 aa).

The next 2 membrane-spanning stretches (helical) occupy residues 21 to 43 (PFIL…TFYG) and 72 to 91 (WFPV…TAMM).

It localises to the cell membrane. Its pathway is energy metabolism; sulfur metabolism. In terms of biological role, sulfur carrier protein probably involved in sulfur trafficking for oxidative dissimilatory sulfur metabolism. May be a component of a cytoplasmic sulfur relay system delivering sulfur to DsrC. Binds sulfur in the presence of sulfide in vitro. This Allochromatium vinosum (strain ATCC 17899 / DSM 180 / NBRC 103801 / NCIMB 10441 / D) (Chromatium vinosum) protein is Sulfur carrier protein DsrE2.